The chain runs to 411 residues: MNLVLGLGLFLAGLLTVKGLLQDRDAPDTYESPVRVQEWRGKKDARELTRHNMEFGFKLLQRLASNSRQGNIFLSPLSISTAFSMLSLGAQNSTLEEIREGFNFKEMSDRDMHMGFHYLLQKLNRETQDVKMSIGNALFMDQRLRPQQRFLKLAKNLYDADMILTNFQDLENTQKNINKYISRKTHNRIENMVKNIDPGTVMLLTNYIYFQGRWQYEFDPKQTKEEDFFIEEGKTVKVPMMFQRGMYDMAYDSQLSCTILEMPYRGNITATFVLPDSGKLRLLEQGLQADIFAKWKSLLSKRVVDVWVPRLHISATYNMKKVLSRLGISKIFEEHGDLTRISSHRSLKVGEAVHKAELRMNEKGTEGAAGSGAQTLPMETPRRMKLNAPFLMMIYENLMPSMIFLARIYNP.

Positions 1–20 (MNLVLGLGLFLAGLLTVKGL) are cleaved as a signal peptide. N-linked (GlcNAc...) asparagine glycosylation is found at Asn92 and Asn267. The interval 364-382 (GTEGAAGSGAQTLPMETPR) is reactive center loop.

It belongs to the serpin family. In terms of assembly, forms a stable complex with KLK7. Post-translationally, glycosylation slightly decreases affinity for heparin, but otherwise has no significant effect on KLK7 inhibitory activity or thermal stability of the protein. As to expression, expressed in visceral adipose tissues.

Its subcellular location is the secreted. Inhibition of KLK7 is enhanced by heparin. Its function is as follows. Adipokine that modulates insulin action by specifically inhibiting its target protease KLK7 in white adipose tissues. The chain is Serpin A12 (Serpina12) from Rattus norvegicus (Rat).